The following is a 680-amino-acid chain: tRNA 5-methylaminomethyl-2-thiouridine biosynthesis bifunctional protein MnmC (680 aa).

Residues 1–251 (MSQNHILPQN…KREMIAGTLT (251 aa)) form a tRNA (mnm(5)s(2)U34)-methyltransferase region. An FAD-dependent cmnm(5)s(2)U34 oxidoreductase region spans residues 277 to 680 (IGGGVASAAL…RLLKGKPLDI (404 aa)).

It in the N-terminal section; belongs to the methyltransferase superfamily. tRNA (mnm(5)s(2)U34)-methyltransferase family. In the C-terminal section; belongs to the DAO family. Requires FAD as cofactor.

It localises to the cytoplasm. The catalysed reaction is 5-aminomethyl-2-thiouridine(34) in tRNA + S-adenosyl-L-methionine = 5-methylaminomethyl-2-thiouridine(34) in tRNA + S-adenosyl-L-homocysteine + H(+). Its function is as follows. Catalyzes the last two steps in the biosynthesis of 5-methylaminomethyl-2-thiouridine (mnm(5)s(2)U) at the wobble position (U34) in tRNA. Catalyzes the FAD-dependent demodification of cmnm(5)s(2)U34 to nm(5)s(2)U34, followed by the transfer of a methyl group from S-adenosyl-L-methionine to nm(5)s(2)U34, to form mnm(5)s(2)U34. The sequence is that of tRNA 5-methylaminomethyl-2-thiouridine biosynthesis bifunctional protein MnmC from Aliivibrio fischeri (strain ATCC 700601 / ES114) (Vibrio fischeri).